Reading from the N-terminus, the 30-residue chain is Cycloviolacin-O4 (30 aa).

Residues 1 to 30 constitute a cross-link (cyclopeptide (Gly-Asn)); the sequence is GIPCGESCVWIPCISSAIGCSCKNKVCYRN. Cystine bridges form between Cys-4–Cys-20, Cys-8–Cys-22, and Cys-13–Cys-27.

In terms of processing, this is a cyclic peptide. In terms of tissue distribution, expressed in petals, petioles, roots and runners but not in leaves (at protein level).

Its function is as follows. Probably participates in a plant defense mechanism. This chain is Cycloviolacin-O4, found in Viola odorata (Sweet violet).